Consider the following 576-residue polypeptide: Vesicular glutamate transporter 1 (576 aa).

The Cytoplasmic segment spans residues 1 to 63; the sequence is MEFRKEEFKK…CTCFGLPRRY (63 aa). The helical transmembrane segment at 64-84 threads the bilayer; it reads IIAIMSGLGFCISFGIRCNLG. The Vesicular segment spans residues 85–116; the sequence is VAIVSMVNNNTVYKGNKIVIEQAQFTWDPETV. A glycan (N-linked (GlcNAc...) asparagine) is linked at Asn93. A helical transmembrane segment spans residues 117–137; sequence GMIHGSFFWGYIVTQIPGGYI. Residues 138–140 are Cytoplasmic-facing; the sequence is CQK. Residues 141-161 form a helical membrane-spanning segment; sequence FAANRVFGFAIVATSTLNMLI. The Vesicular portion of the chain corresponds to 162–168; that stretch reads PSAARVH. Residues 169–189 form a helical membrane-spanning segment; sequence FACVICVRILQGLVEGVTYPA. Residues 190–208 lie on the Cytoplasmic side of the membrane; sequence CHGIWSKWAPPLERSRLAT. The chain crosses the membrane as a helical span at residues 209 to 229; it reads TAFCGSYAGAVVAMPLAGVLV. The Vesicular portion of the chain corresponds to 230–236; that stretch reads QYSGWSS. The helical transmembrane segment at 237–257 threads the bilayer; it reads VFYVYGSFGIMWYMFWILVSY. Residues 258 to 302 are Cytoplasmic-facing; sequence ESPAIHPTISEEEKKYIEESIGESTGLMNPMAKFKAPWRKFFTSM. The chain crosses the membrane as a helical span at residues 303–323; it reads PVYAIIVANFCRSWTFYLLLI. The Vesicular segment spans residues 324–341; it reads SQPAYFEEVFGFEISKVG. A helical membrane pass occupies residues 342–362; it reads LLSALPHLVMTIIVPIGGQIA. The Cytoplasmic portion of the chain corresponds to 363-378; it reads DFLRTKRIMSTTNVRK. A helical transmembrane segment spans residues 379 to 399; sequence MMNCGGFGMEATLLLVVGYSH. Residues 400-401 lie on the Vesicular side of the membrane; sequence SR. Residues 402 to 422 form a helical membrane-spanning segment; it reads GVAISFLVLAVGFSGFAISGF. Residues 423–435 lie on the Cytoplasmic side of the membrane; it reads NVNHLDIAPRYAS. A helical membrane pass occupies residues 436-456; the sequence is ILMGISNGVGTLSGMVCPLIV. At 457 to 469 the chain is on the vesicular side; sequence GAMTKHKTREEWQ. The helical transmembrane segment at 470–490 threads the bilayer; that stretch reads YVFLIASLVHYGGVLFYGIFA. At 491–576 the chain is on the cytoplasmic side; it reads SGEKQPWAEP…YGTVAERDLS (86 aa). Positions 517-547 are disordered; sequence ADESEEQSQAYGAYGSYGATQTTSQQNGGWT. Over residues 534–545 the composition is skewed to polar residues; sequence GATQTTSQQNGG.

Belongs to the major facilitator superfamily. Sodium/anion cotransporter family. VGLUT subfamily.

Its subcellular location is the cytoplasmic vesicle. It localises to the secretory vesicle. It is found in the synaptic vesicle membrane. The protein resides in the cell membrane. The protein localises to the synapse. Its subcellular location is the synaptosome. The catalysed reaction is L-glutamate(out) = L-glutamate(in). The enzyme catalyses chloride(in) = chloride(out). It carries out the reaction 3 Na(+)(out) + phosphate(out) = 3 Na(+)(in) + phosphate(in). It catalyses the reaction phosphate(in) = phosphate(out). The catalysed reaction is K(+)(in) + H(+)(out) = K(+)(out) + H(+)(in). Chloride channel activity is allosterically activated by lumenal H(+) and Cl(-) leading to synaptic vesicles acidification. The L-glutamate transport activity is allosterically activated by lumenal H(+) and Cl(-). The allosteric activation by H(+) efficiently prevents non-vesicular efflux across the plasma membrane, thereby restricting L-glutamate transport activity to acidic membranes such as synaptic vesicles. In terms of biological role, multifunctional transporter that transports L-glutamate as well as multiple ions such as chloride, proton, potassium, sodium and phosphate. At the synaptic vesicle membrane, mainly functions as an uniporter which transports preferentially L-glutamate but also phosphate from the cytoplasm into synaptic vesicles at presynaptic nerve terminals of excitatory neural cells. The L-glutamate or phosphate uniporter activity is electrogenic and is driven by the proton electrochemical gradient, mainly by the electrical gradient established by the vacuolar H(+)-ATPase across the synaptic vesicle membrane. In addition, functions as a chloride channel that allows a chloride permeation through the synaptic vesicle membrane that affects the proton electrochemical gradient and promotes synaptic vesicles acidification. Moreover, may function as a K(+)/H(+) antiport allowing to maintain the electrical gradient and to decrease chemical gradient and therefore sustain vesicular glutamate uptake. The vesicular K(+)/H(+) antiport activity is electroneutral. At the plasma membrane, following exocytosis, functions as a symporter of Na(+) and phosphate from the extracellular space to the cytoplasm allowing synaptic phosphate homeostasis regulation. The symporter activity is driven by an inside negative membrane potential and is electrogenic. Is necessary for synaptic signaling of visual-evoked responses from photoreceptors. The sequence is that of Vesicular glutamate transporter 1 from Xenopus tropicalis (Western clawed frog).